The chain runs to 748 residues: Rho GTPase-activating protein 24 (748 aa).

The region spanning N18–W124 is the PH domain. One can recognise a Rho-GAP domain in the interval Q134–F328. Residues F328–S476 form a disordered region. Polar residues-rich tracts occupy residues Q335–N347 and G356–E368. 8 positions are modified to phosphoserine: S369, S391, S396, S398, S402, S413, S415, and S437. The segment covering S369–S381 has biased composition (basic and acidic residues). Residues P382–N405 show a composition bias toward polar residues. Residues I432 to S476 are compositionally biased toward polar residues. Phosphothreonine is present on T452. S495 bears the Phosphoserine mark. The disordered stretch occupies residues D582–N640. The span at D600–S615 shows a compositional bias: basic and acidic residues. Low complexity predominate over residues G617–S630. Over residues E631–N640 the composition is skewed to polar residues. Residues S649–F729 adopt a coiled-coil conformation.

In terms of assembly, interacts with FLNA. In terms of processing, phosphorylated by ROCK, leading to activate the RacGAP activity.

It localises to the cytoplasm. The protein localises to the cytoskeleton. Its subcellular location is the cell junction. The protein resides in the adherens junction. It is found in the focal adhesion. It localises to the cell projection. Functionally, rho GTPase-activating protein involved in cell polarity, cell morphology and cytoskeletal organization. Acts as a GTPase activator for the Rac-type GTPase by converting it to an inactive GDP-bound state. Controls actin remodeling by inactivating Rac downstream of Rho leading to suppress leading edge protrusion and promotes cell retraction to achieve cellular polarity. Able to suppress RAC1 and CDC42 activity in vitro. Overexpression induces cell rounding with partial or complete disruption of actin stress fibers and formation of membrane ruffles, lamellipodia, and filopodia. Isoform 2 is a vascular cell-specific GAP involved in modulation of angiogenesis. The protein is Rho GTPase-activating protein 24 (Arhgap24) of Rattus norvegicus (Rat).